The primary structure comprises 166 residues: 2-amino-4-hydroxy-6-hydroxymethyldihydropteridine pyrophosphokinase (166 aa).

The protein belongs to the HPPK family.

It catalyses the reaction 6-hydroxymethyl-7,8-dihydropterin + ATP = (7,8-dihydropterin-6-yl)methyl diphosphate + AMP + H(+). It functions in the pathway cofactor biosynthesis; tetrahydrofolate biosynthesis; 2-amino-4-hydroxy-6-hydroxymethyl-7,8-dihydropteridine diphosphate from 7,8-dihydroneopterin triphosphate: step 4/4. Catalyzes the transfer of pyrophosphate from adenosine triphosphate (ATP) to 6-hydroxymethyl-7,8-dihydropterin, an enzymatic step in folate biosynthesis pathway. The protein is 2-amino-4-hydroxy-6-hydroxymethyldihydropteridine pyrophosphokinase (folK) of Streptococcus pyogenes serotype M18 (strain MGAS8232).